The primary structure comprises 266 residues: Exosome complex component Rrp42 (266 aa).

The protein belongs to the RNase PH family. Rrp42 subfamily. Component of the archaeal exosome complex. Forms a hexameric ring-like arrangement composed of 3 Rrp41-Rrp42 heterodimers. The hexameric ring associates with a trimer of Rrp4 and/or Csl4 subunits.

It is found in the cytoplasm. In terms of biological role, non-catalytic component of the exosome, which is a complex involved in RNA degradation. Contributes to the structuring of the Rrp41 active site. This chain is Exosome complex component Rrp42, found in Methanosarcina acetivorans (strain ATCC 35395 / DSM 2834 / JCM 12185 / C2A).